The sequence spans 573 residues: Pyrophosphate--fructose 6-phosphate 1-phosphotransferase (573 aa).

G90 serves as a coordination point for diphosphate. D184 contributes to the Mg(2+) binding site. Substrate is bound by residues 212–214, 251–252, 259–261, E320, and 434–437; these read TID, KY, MGR, and YEGR. The active-site Proton acceptor is the D214.

This sequence belongs to the phosphofructokinase type A (PFKA) family. PPi-dependent PFK group II subfamily. Clade 'Long' sub-subfamily. Homodimer. The cofactor is Mg(2+).

The protein resides in the cytoplasm. The catalysed reaction is beta-D-fructose 6-phosphate + diphosphate = beta-D-fructose 1,6-bisphosphate + phosphate + H(+). Its pathway is carbohydrate degradation; glycolysis; D-glyceraldehyde 3-phosphate and glycerone phosphate from D-glucose: step 3/4. Non-allosteric. Catalyzes the phosphorylation of D-fructose 6-phosphate, the first committing step of glycolysis. Uses inorganic phosphate (PPi) as phosphoryl donor instead of ATP like common ATP-dependent phosphofructokinases (ATP-PFKs), which renders the reaction reversible, and can thus function both in glycolysis and gluconeogenesis. Consistently, PPi-PFK can replace the enzymes of both the forward (ATP-PFK) and reverse (fructose-bisphosphatase (FBPase)) reactions. The chain is Pyrophosphate--fructose 6-phosphate 1-phosphotransferase from Treponema pallidum (strain Nichols).